Here is a 212-residue protein sequence, read N- to C-terminus: Imidazole glycerol phosphate synthase subunit HisH (212 aa).

The region spanning 1-212 is the Glutamine amidotransferase type-1 domain; that stretch reads MLAILDYKAG…YAYCKEASRA (212 aa). Cys79 (nucleophile) is an active-site residue. Catalysis depends on residues His187 and Glu189.

As to quaternary structure, heterodimer of HisH and HisF.

It localises to the cytoplasm. It catalyses the reaction 5-[(5-phospho-1-deoxy-D-ribulos-1-ylimino)methylamino]-1-(5-phospho-beta-D-ribosyl)imidazole-4-carboxamide + L-glutamine = D-erythro-1-(imidazol-4-yl)glycerol 3-phosphate + 5-amino-1-(5-phospho-beta-D-ribosyl)imidazole-4-carboxamide + L-glutamate + H(+). The catalysed reaction is L-glutamine + H2O = L-glutamate + NH4(+). Its pathway is amino-acid biosynthesis; L-histidine biosynthesis; L-histidine from 5-phospho-alpha-D-ribose 1-diphosphate: step 5/9. Its function is as follows. IGPS catalyzes the conversion of PRFAR and glutamine to IGP, AICAR and glutamate. The HisH subunit catalyzes the hydrolysis of glutamine to glutamate and ammonia as part of the synthesis of IGP and AICAR. The resulting ammonia molecule is channeled to the active site of HisF. The polypeptide is Imidazole glycerol phosphate synthase subunit HisH (Nitratidesulfovibrio vulgaris (strain DSM 19637 / Miyazaki F) (Desulfovibrio vulgaris)).